Reading from the N-terminus, the 97-residue chain is UPF0416 protein RC0826 (97 aa).

The first 33 residues, 1–33 (MRIFVKAAISTAAWRFYAHPTVAMGICVGTALA), serve as a signal peptide directing secretion.

This sequence belongs to the UPF0416 family.

The protein is UPF0416 protein RC0826 of Rickettsia conorii (strain ATCC VR-613 / Malish 7).